Consider the following 213-residue polypeptide: Nicolin-1 (213 aa).

In terms of assembly, part of the neuronal tubulin polyglutamylase complex which contains TPGS1, TPGS2, TTLL1, LRRC49 and NICN1.

It localises to the nucleus. This chain is Nicolin-1 (NICN1), found in Canis lupus familiaris (Dog).